The following is an 860-amino-acid chain: Leucine--tRNA ligase (860 aa).

The 'HIGH' region signature appears at 42 to 52 (PYPSGRLHMGH). The short motif at 619-623 (KMSKS) is the 'KMSKS' region element. Lys622 is a binding site for ATP.

It belongs to the class-I aminoacyl-tRNA synthetase family.

It localises to the cytoplasm. It carries out the reaction tRNA(Leu) + L-leucine + ATP = L-leucyl-tRNA(Leu) + AMP + diphosphate. The protein is Leucine--tRNA ligase of Pectobacterium atrosepticum (strain SCRI 1043 / ATCC BAA-672) (Erwinia carotovora subsp. atroseptica).